The following is a 365-amino-acid chain: Aminomethyltransferase (365 aa).

The protein belongs to the GcvT family. As to quaternary structure, the glycine cleavage system is composed of four proteins: P, T, L and H.

The catalysed reaction is N(6)-[(R)-S(8)-aminomethyldihydrolipoyl]-L-lysyl-[protein] + (6S)-5,6,7,8-tetrahydrofolate = N(6)-[(R)-dihydrolipoyl]-L-lysyl-[protein] + (6R)-5,10-methylene-5,6,7,8-tetrahydrofolate + NH4(+). Functionally, the glycine cleavage system catalyzes the degradation of glycine. The sequence is that of Aminomethyltransferase from Aeromonas salmonicida (strain A449).